We begin with the raw amino-acid sequence, 59 residues long: Large ribosomal subunit protein uL30 (59 aa).

It belongs to the universal ribosomal protein uL30 family. As to quaternary structure, part of the 50S ribosomal subunit.

The protein is Large ribosomal subunit protein uL30 of Haemophilus ducreyi (strain 35000HP / ATCC 700724).